We begin with the raw amino-acid sequence, 513 residues long: MEISWGRALWRNFLGQSPDWYKLALIIFLIVNPLIFLISPFVAGWLLVAEFIFTLAMALKCYPLLPGGLLAIEAVFIGMTSAEHVREEVAANLEVLLLLMFMVAGIYFMKQLLLFIFTRLLLSIRSKMLLSLSFCVAAAFLSAFLDALTVVAVVISVAVGFYGIYHRVASSRTEDTDLQDDSHIDKHYKVVLEQFRGFLRSLMMHAGVGTALGGVMTMVGEPQNLIIAKAAGWHFGDFFLRMSPVTVPVLICGLLTCLLVEKLRWFGYGETLPEKVREVLQQFDDQSRHQRTRQDKIRLIVQAIIGVWLVTALALHLAEVGLIGLSVIILATSLTGVTDEHAIGKAFTESLPFTALLTVFFSVVAVIIDQQLFSPIIQFVLQASEHAQLSLFYIFNGLLSSISDNVFVGTIYINEAKAAMESGAITLKQYELQAVAINTGTNLPSVATPNGQAAFLFLLTSALAPLIRLSYGRMVWMALPYTLVLTLVGLLCVEFTLAPVTEWFMQMGWIATL.

A run of 12 helical transmembrane segments spans residues 23 to 43, 52 to 72, 97 to 117, 120 to 140, 144 to 164, 202 to 222, 238 to 258, 303 to 323, 348 to 368, 391 to 411, 447 to 467, and 475 to 495; these read LALI…PFVA, IFTL…LLAI, LLLM…LFIF, LLLS…AAAF, FLDA…FYGI, LMMH…VGEP, FFLR…LTCL, AIIG…VGLI, TESL…AVII, LFYI…VGTI, ATPN…APLI, and VWMA…CVEF.

Belongs to the NhaB Na(+)/H(+) (TC 2.A.34) antiporter family.

Its subcellular location is the cell inner membrane. It catalyses the reaction 2 Na(+)(in) + 3 H(+)(out) = 2 Na(+)(out) + 3 H(+)(in). Functionally, na(+)/H(+) antiporter that extrudes sodium in exchange for external protons. The sequence is that of Na(+)/H(+) antiporter NhaB from Escherichia coli (strain 55989 / EAEC).